The sequence spans 65 residues: Large ribosomal subunit protein bL33 (65 aa).

The segment at 17–40 (SRSVPSSEKRSAGVSRYTTEKNRR) is disordered.

The protein belongs to the bacterial ribosomal protein bL33 family.

This is Large ribosomal subunit protein bL33 from Prochlorococcus marinus (strain NATL1A).